The primary structure comprises 293 residues: Acetylglutamate kinase (293 aa).

Substrate is bound by residues 66–67 (GG), arginine 88, and asparagine 190.

Belongs to the acetylglutamate kinase family. ArgB subfamily.

The protein localises to the cytoplasm. The catalysed reaction is N-acetyl-L-glutamate + ATP = N-acetyl-L-glutamyl 5-phosphate + ADP. The protein operates within amino-acid biosynthesis; L-arginine biosynthesis; N(2)-acetyl-L-ornithine from L-glutamate: step 2/4. Its function is as follows. Catalyzes the ATP-dependent phosphorylation of N-acetyl-L-glutamate. This chain is Acetylglutamate kinase, found in Thiobacillus denitrificans (strain ATCC 25259 / T1).